Reading from the N-terminus, the 40-residue chain is Dermonecrotic toxin LgSicTox-alphaI-1 (40 aa).

Glutamate 32 and aspartate 34 together coordinate Mg(2+).

This sequence belongs to the arthropod phospholipase D family. Class II subfamily. Mg(2+) is required as a cofactor. Contains 2 disulfide bonds. As to expression, expressed by the venom gland.

The protein localises to the secreted. It carries out the reaction an N-(acyl)-sphingosylphosphocholine = an N-(acyl)-sphingosyl-1,3-cyclic phosphate + choline. The catalysed reaction is an N-(acyl)-sphingosylphosphoethanolamine = an N-(acyl)-sphingosyl-1,3-cyclic phosphate + ethanolamine. It catalyses the reaction a 1-acyl-sn-glycero-3-phosphocholine = a 1-acyl-sn-glycero-2,3-cyclic phosphate + choline. The enzyme catalyses a 1-acyl-sn-glycero-3-phosphoethanolamine = a 1-acyl-sn-glycero-2,3-cyclic phosphate + ethanolamine. In terms of biological role, dermonecrotic toxins cleave the phosphodiester linkage between the phosphate and headgroup of certain phospholipids (sphingolipid and lysolipid substrates), forming an alcohol (often choline) and a cyclic phosphate. This toxin acts on sphingomyelin (SM). It may also act on ceramide phosphoethanolamine (CPE), lysophosphatidylcholine (LPC) and lysophosphatidylethanolamine (LPE), but not on lysophosphatidylserine (LPS), and lysophosphatidylglycerol (LPG). It acts by transphosphatidylation, releasing exclusively cyclic phosphate products as second products. In vivo, intradermal injection induces dermonecrosis. Induces, hemolysis, vascular permeability, edema, inflammatory response, and platelet aggregation. This Loxosceles gaucho (Spider) protein is Dermonecrotic toxin LgSicTox-alphaI-1.